The primary structure comprises 585 residues: MFSCFCFSLQDNSFSSTTVTECDEDPVSLHEDQTDCSSLRDENNKENYPDAGALVEEHAPPSWEPQQQNVEATVLVDSVLRPSMGNFKSRKPKSIFKAESGRSHGESQETEHVVSSQSECQVRAGTPAHESPQNNAFKCQETVRLQPRIDQRTAISPKDAFETRQDLNEEEAAQVHGVKDPAPASTQSVLADGTDSADPSPVHKDGQNEADSAPEDLHSVGTSRLLYHITDGDNPLLSPRCSIFSQSQRFNLDPESAPSPPSTQQFMMPRSSSRCSCGDGKEPQTITQLTKHIQSLKRKIRKFEEKFEQEKKYRPSHGDKTSNPEVLKWMNDLAKGRKQLKELKLKLSEEQGSAPKGPPRNLLCEQPTVPRENGKPEAAGPEPSSSGEETPDAALTCLKERREQLPPQEDSKVTKQDKNLIKPLYDRYRIIKQILSTPSLIPTIQEEEDSDEDRPQGSQQPSLADPASHLPVGDHLTYSNETEPVRALLPDEKKEVKPPALSMSNLHEATMPVLLDHLRETRADKKRLRKALREFEEQFFKQTGRSPQKEDRIPMADEYYEYKHIKAKLRLLEVLISKQDVAKTI.

Disordered regions lie at residues 26-45, 83-138, and 171-216; these read PVSL…ENNK, SMGN…NAFK, and EAAQ…APED. Basic and acidic residues-rich tracts occupy residues 27-45 and 99-112; these read VSLH…ENNK and ESGR…ETEH. S131 is modified (phosphoserine). A Phosphoserine modification is found at S238. Disordered regions lie at residues 250 to 282, 349 to 391, and 441 to 477; these read FNLD…DGKE, EEQG…EETP, and IPTI…DHLT. The span at 262-275 shows a compositional bias: polar residues; that stretch reads STQQFMMPRSSSRC. A phosphoserine mark is found at S385 and S386.

Belongs to the FAM13 family.

This chain is Protein FAM13C (FAM13C), found in Homo sapiens (Human).